A 273-amino-acid polypeptide reads, in one-letter code: Large ribosomal subunit protein uL2 (273 aa).

Disordered regions lie at residues 28 to 55 (TPEKSLTRGKPAKAGRGAGGRISVRHRG) and 222 to 273 (GMAM…SKRK). The span at 255 to 273 (YKTRKKRRVSDRFIVSKRK) shows a compositional bias: basic residues.

It belongs to the universal ribosomal protein uL2 family. Part of the 50S ribosomal subunit. Forms a bridge to the 30S subunit in the 70S ribosome.

Its function is as follows. One of the primary rRNA binding proteins. Required for association of the 30S and 50S subunits to form the 70S ribosome, for tRNA binding and peptide bond formation. It has been suggested to have peptidyltransferase activity; this is somewhat controversial. Makes several contacts with the 16S rRNA in the 70S ribosome. The chain is Large ribosomal subunit protein uL2 from Treponema pallidum (strain Nichols).